The primary structure comprises 359 residues: Innexin inx2 (359 aa).

Residues 1–22 (MFDVFGSVKGLLKLDSVCIDNN) lie on the Cytoplasmic side of the membrane. Residues 23 to 43 (LFRLHYKATVIILIAFSLLVT) traverse the membrane as a helical segment. Topologically, residues 44 to 109 (SRQYIGDPID…KDEVKYHKYY (66 aa)) are extracellular. A helical transmembrane segment spans residues 110–130 (QWVCFVLFFQAILFYIPRYLW). Residues 131 to 180 (KTWEGGRIKMLVLDLNSPVVNEQSKADRKKLLVDYFATNLHTQNFYAYRF) are Cytoplasmic-facing. Residues 181–201 (FICEALNFVNVVGQIYFMDLF) traverse the membrane as a helical segment. The Extracellular portion of the chain corresponds to 202-266 (LDGEFTTYGS…VLPLNIVNEK (65 aa)). The helical transmembrane segment at 267–287 (IYVFLWFWFVILSVLTGIGLV) threads the bilayer. At 288-359 (YRLATAMGPQ…AKKLEGKEIV (72 aa)) the chain is on the cytoplasmic side.

It belongs to the pannexin family. In terms of tissue distribution, widespread expression in embryo, in anterior and posterior row of neural precursors, midline precursors and in epithelial sheet of stomodeum.

It is found in the cell membrane. The protein resides in the cell junction. It localises to the gap junction. Functionally, structural components of the gap junctions. The polypeptide is Innexin inx2 (inx2) (Schistocerca americana (American grasshopper)).